The sequence spans 355 residues: MFNIMLVKFVVIFALILASCRVEADNTSVLPEGFVDAAQRSTHTNNWAVLVDASRFWFNYRHVANVLSIYRSVKRLGIPDSQIILMIADDMACNARNPRPGQVYNNANQHINVYGDDVEVDYRGYEVTVENFVRLLTGRTQNGTARSKKLLSDAGSNVLIYLTGHGGDGFLKFQDSEEITSQELADGIQQMWEKKRYNELFFMVDTCQAASLYEKFTSPNVLAVASSLVGEDSLSHHVDPSIGVYMIDRYTYYALEFLEKVQPFSKRTIGEFLQVCPKRVCISTVGVRKDLYPRDPHKVPITDFFGAIRPTRVSTDRINVTLANEDDFIFDKDKMVTKKPFKIVMESQFPSELFK.

An N-terminal signal peptide occupies residues 1–24 (MFNIMLVKFVVIFALILASCRVEA). Active-site residues include His165 and Cys207.

Belongs to the peptidase C13 family.

It functions in the pathway glycolipid biosynthesis; glycosylphosphatidylinositol-anchor biosynthesis. Functionally, mediates GPI anchoring in the endoplasmic reticulum, by replacing a protein's C-terminal GPI attachment signal peptide with a pre-assembled GPI. During this transamidation reaction, the GPI transamidase forms a carbonyl intermediate with the substrate protein. This chain is Putative GPI-anchor transamidase, found in Drosophila melanogaster (Fruit fly).